The chain runs to 72 residues: Large ribosomal subunit protein uL29 (72 aa).

This sequence belongs to the universal ribosomal protein uL29 family.

This Prochlorococcus marinus (strain AS9601) protein is Large ribosomal subunit protein uL29.